The chain runs to 227 residues: Cytidylate kinase (227 aa).

12–20 is an ATP binding site; it reads GPSGVGKGT.

It belongs to the cytidylate kinase family. Type 1 subfamily.

The protein resides in the cytoplasm. The enzyme catalyses CMP + ATP = CDP + ADP. It catalyses the reaction dCMP + ATP = dCDP + ADP. This chain is Cytidylate kinase, found in Shewanella denitrificans (strain OS217 / ATCC BAA-1090 / DSM 15013).